Here is a 337-residue protein sequence, read N- to C-terminus: Calcium-binding protein 39-like (337 aa).

It belongs to the Mo25 family. In terms of assembly, component of a trimeric complex composed of STK11/LKB1, STRAD (STRADA or STRADB) and CAB39/MO25 (CAB39/MO25alpha or CAB39L/MO25beta): the complex tethers STK11/LKB1 in the cytoplasm and stimulates its catalytic activity.

Component of a complex that binds and activates STK11/LKB1. In the complex, required to stabilize the interaction between CAB39/MO25 (CAB39/MO25alpha or CAB39L/MO25beta) and STK11/LKB1. This is Calcium-binding protein 39-like (Cab39l) from Mus musculus (Mouse).